Reading from the N-terminus, the 228-residue chain is Ion-translocating oxidoreductase complex subunit G (228 aa).

A helical membrane pass occupies residues 35–55; the sequence is ALSLGLVCALVAVALLLGNQL. Position 197 is an FMN phosphoryl threonine (threonine 197).

Belongs to the RnfG family. As to quaternary structure, the complex is composed of six subunits: RnfA, RnfB, RnfC, RnfD, RnfE and RnfG. It depends on FMN as a cofactor.

It is found in the cell inner membrane. In terms of biological role, part of a membrane-bound complex that couples electron transfer with translocation of ions across the membrane. The protein is Ion-translocating oxidoreductase complex subunit G of Stutzerimonas stutzeri (Pseudomonas stutzeri).